The chain runs to 265 residues: Formyltransferase/hydrolase complex Fhc subunit C (265 aa).

The protein belongs to the FwdC/FmdC family. Octaheteromer. Part of the formyltransferase/hydrolase complex fhc; composed of FhcA, FhcB, FhcC and FhcD.

The protein localises to the cytoplasm. Its pathway is one-carbon metabolism; formaldehyde degradation; formate from formaldehyde (H(4)MPT route): step 4/5. In terms of biological role, involved in the transformation of 5-formyl tetrahydromethanopterin (5-formyl-H(4)MPT) to methanofuran (MFR) and formate via the formylmethanofuran (formyl-MFR). The sequence is that of Formyltransferase/hydrolase complex Fhc subunit C (fhcC) from Methylorubrum extorquens (strain ATCC 14718 / DSM 1338 / JCM 2805 / NCIMB 9133 / AM1) (Methylobacterium extorquens).